The following is a 248-amino-acid chain: 1-(5-phosphoribosyl)-5-[(5-phosphoribosylamino)methylideneamino] imidazole-4-carboxamide isomerase (248 aa).

D8 acts as the Proton acceptor in catalysis. The Proton donor role is filled by D131.

It belongs to the HisA/HisF family.

The protein localises to the cytoplasm. The enzyme catalyses 1-(5-phospho-beta-D-ribosyl)-5-[(5-phospho-beta-D-ribosylamino)methylideneamino]imidazole-4-carboxamide = 5-[(5-phospho-1-deoxy-D-ribulos-1-ylimino)methylamino]-1-(5-phospho-beta-D-ribosyl)imidazole-4-carboxamide. It functions in the pathway amino-acid biosynthesis; L-histidine biosynthesis; L-histidine from 5-phospho-alpha-D-ribose 1-diphosphate: step 4/9. The sequence is that of 1-(5-phosphoribosyl)-5-[(5-phosphoribosylamino)methylideneamino] imidazole-4-carboxamide isomerase from Nitrosomonas eutropha (strain DSM 101675 / C91 / Nm57).